A 705-amino-acid polypeptide reads, in one-letter code: Elongation factor G (705 aa).

The tr-type G domain maps to 8–294 (ELYRNFGIMA…SVIDYLPSPL (287 aa)). Residues 17–24 (AHIDAGKT), 92–96 (DTPGH), and 146–149 (NKMD) contribute to the GTP site.

Belongs to the TRAFAC class translation factor GTPase superfamily. Classic translation factor GTPase family. EF-G/EF-2 subfamily.

It is found in the cytoplasm. Its function is as follows. Catalyzes the GTP-dependent ribosomal translocation step during translation elongation. During this step, the ribosome changes from the pre-translocational (PRE) to the post-translocational (POST) state as the newly formed A-site-bound peptidyl-tRNA and P-site-bound deacylated tRNA move to the P and E sites, respectively. Catalyzes the coordinated movement of the two tRNA molecules, the mRNA and conformational changes in the ribosome. This Cereibacter sphaeroides (strain KD131 / KCTC 12085) (Rhodobacter sphaeroides) protein is Elongation factor G.